A 289-amino-acid polypeptide reads, in one-letter code: LBH domain-containing protein 1 (289 aa).

Disordered regions lie at residues 1–36 (MALV…PLWD) and 205–289 (EGAE…ASQD). Positions 1-128 (MALVPGRSKE…AEAFFQDQSE (128 aa)) constitute an LBH domain. Over residues 15-25 (TRNSPGSSQHP) the composition is skewed to polar residues.

In terms of tissue distribution, expressed in bladder cancer tissues (at protein level).

The sequence is that of LBH domain-containing protein 1 from Homo sapiens (Human).